The following is a 132-amino-acid chain: Ribosome-binding factor A (132 aa).

Belongs to the RbfA family. In terms of assembly, monomer. Binds 30S ribosomal subunits, but not 50S ribosomal subunits or 70S ribosomes.

It localises to the cytoplasm. In terms of biological role, one of several proteins that assist in the late maturation steps of the functional core of the 30S ribosomal subunit. Associates with free 30S ribosomal subunits (but not with 30S subunits that are part of 70S ribosomes or polysomes). Required for efficient processing of 16S rRNA. May interact with the 5'-terminal helix region of 16S rRNA. This Pectobacterium carotovorum subsp. carotovorum (strain PC1) protein is Ribosome-binding factor A.